We begin with the raw amino-acid sequence, 312 residues long: Cytochrome c biogenesis protein CcsA (312 aa).

The next 8 helical transmembrane spans lie at 12-32 (NLVF…LSFF), 47-67 (IVAN…AGYF), 72-92 (LYES…YVEF), 98-118 (LVGA…NLTL), 144-164 (MMLS…FLVI), 220-240 (IIGL…VWAN), 254-271 (TWAL…HSRI), and 281-301 (AILG…VNFL).

It belongs to the CcmF/CycK/Ccl1/NrfE/CcsA family. May interact with Ccs1.

Its subcellular location is the plastid. The protein localises to the chloroplast thylakoid membrane. Its function is as follows. Required during biogenesis of c-type cytochromes (cytochrome c6 and cytochrome f) at the step of heme attachment. In Trieres chinensis (Marine centric diatom), this protein is Cytochrome c biogenesis protein CcsA.